A 428-amino-acid chain; its full sequence is Metal tolerance protein 10 (428 aa).

The Cytoplasmic portion of the chain corresponds to 1 to 140 (MPLNSYIFFL…EMKKLAKSER (140 aa)). Residues 141 to 161 (LAVHISNATNLVLFVAKVYAS) form a helical membrane-spanning segment. Residues 162-167 (MESRSM) lie on the Vacuolar side of the membrane. Residues 168 to 188 (AVIASTLDSLLDLLSGFILWF) traverse the membrane as a helical segment. Residues 189–209 (TANAMRKPNQFHYPIGKRRMQ) lie on the Cytoplasmic side of the membrane. Residues 210 to 230 (PVGIIVFASVMATLGLQVLLE) form a helical membrane-spanning segment. Residues 231–248 (SGRQLVAKSGIHMNSTEE) lie on the Vacuolar side of the membrane. A helical transmembrane segment spans residues 249–269 (KWMIGIMVSVTIVKFLLMLYC). The Cytoplasmic segment spans residues 270-287 (RGFQNEIVRAYAQDHLFD). Residues 288-308 (VVTNSIGLATAVLAVKFYWWI) traverse the membrane as a helical segment. Topologically, residues 309–311 (DPT) are vacuolar. A helical membrane pass occupies residues 312–332 (GAILIALYTIATWARTVLENV). Over 333–428 (HSLIGRSAPP…FTHRPEHKCN (96 aa)) the chain is Cytoplasmic.

The protein belongs to the cation diffusion facilitator (CDF) transporter (TC 2.A.4) family. SLC30A subfamily.

The protein localises to the vacuole membrane. Functionally, involved in sequestration of excess metal in the cytoplasm into vacuoles to maintain metal homeostasis. This Arabidopsis thaliana (Mouse-ear cress) protein is Metal tolerance protein 10 (MTP10).